Reading from the N-terminus, the 190-residue chain is Spermatogenesis-associated protein 12 (190 aa).

As to expression, expressed in testis.

In Homo sapiens (Human), this protein is Spermatogenesis-associated protein 12 (SPATA12).